The chain runs to 341 residues: 2-keto-4-carboxy-3-hexenedioate hydratase (341 aa).

Zn(2+) is bound by residues histidine 8 and histidine 10. 71–73 contacts substrate; the sequence is RAS. Histidine 178 is a Zn(2+) binding site. Residues tyrosine 194 and histidine 223 each coordinate substrate. Catalysis depends on glutamate 284, which acts as the Proton donor/acceptor. Arginine 290 contacts substrate.

The protein belongs to the metallo-dependent hydrolases superfamily. As to quaternary structure, homodimer. Requires Zn(2+) as cofactor.

The enzyme catalyses (3Z)-2-oxo-4-carboxy-3-hexenedioate + H2O = (2S)-2-hydroxy-4-oxobutane-1,2,4-tricarboxylate. It participates in secondary metabolite metabolism; lignin degradation. In terms of biological role, contributes to the degradation of lignin at the level of the protocatechuate 4,5-cleavage pathway. Catalyzes the hydration of the double bond of (3Z)-2-keto-4-carboxy-3-hexenedioate (KCH) to (4S)-4-carboxy-4-hydroxy-2-oxoadipate (CHA, also named (2S)-2-hydroxy-4-oxobutane-1,2,4-tricarboxylate). Is involved in the catabolism of both vanillate and syringate. This chain is 2-keto-4-carboxy-3-hexenedioate hydratase, found in Sphingobium sp. (strain NBRC 103272 / SYK-6).